Consider the following 337-residue polypeptide: uncharacterized protein (337 aa).

The region spanning 12 to 60 is the F-box domain; the sequence is SLNYVDLPDTVHRKIFEYLNPWEIFKLSRISKAIHVTILKNKKFAVKDI.

This is an uncharacterized protein from Caenorhabditis elegans.